Consider the following 909-residue polypeptide: UPF0182 protein H16_A1615 (909 aa).

7 helical membrane passes run 16–36 (TWVVAVIVALIAVSRVTGLVV), 58–78 (ALLFLAVFAVSAGALWLSGWL), 114–134 (VAVLVGLLMAVGELSSWAIAL), 169–189 (WLLLLLGCSAVLAGVVYGLRG), 205–225 (ATHGSALLGLFFALQAWSYWL), 246–266 (VHVGLPVLWLQVGLAAAAAAA), and 281–301 (AAALLVVGSAIVLGTIWPALF).

The protein belongs to the UPF0182 family.

It localises to the cell membrane. This Cupriavidus necator (strain ATCC 17699 / DSM 428 / KCTC 22496 / NCIMB 10442 / H16 / Stanier 337) (Ralstonia eutropha) protein is UPF0182 protein H16_A1615.